The chain runs to 201 residues: 3-isopropylmalate dehydratase small subunit (201 aa).

This sequence belongs to the LeuD family. LeuD type 1 subfamily. In terms of assembly, heterodimer of LeuC and LeuD.

It carries out the reaction (2R,3S)-3-isopropylmalate = (2S)-2-isopropylmalate. Its pathway is amino-acid biosynthesis; L-leucine biosynthesis; L-leucine from 3-methyl-2-oxobutanoate: step 2/4. Functionally, catalyzes the isomerization between 2-isopropylmalate and 3-isopropylmalate, via the formation of 2-isopropylmaleate. The sequence is that of 3-isopropylmalate dehydratase small subunit from Paramagnetospirillum magneticum (strain ATCC 700264 / AMB-1) (Magnetospirillum magneticum).